The primary structure comprises 204 residues: CASP-like protein 2U2 (204 aa).

The Cytoplasmic portion of the chain corresponds to methionine 1–lysine 36. A helical membrane pass occupies residues glycine 37–leucine 57. The Extracellular segment spans residues lysine 58–serine 84. The N-linked (GlcNAc...) asparagine glycan is linked to asparagine 77. Residues leucine 85–leucine 105 form a helical membrane-spanning segment. The Cytoplasmic segment spans residues serine 106 to threonine 117. A helical membrane pass occupies residues valine 118–alanine 138. Residues alanine 139 to histidine 170 lie on the Extracellular side of the membrane. A helical membrane pass occupies residues phenylalanine 171 to isoleucine 191. At serine 192–lysine 204 the chain is on the cytoplasmic side.

This sequence belongs to the Casparian strip membrane proteins (CASP) family. In terms of assembly, homodimer and heterodimers.

It localises to the cell membrane. In Selaginella moellendorffii (Spikemoss), this protein is CASP-like protein 2U2.